We begin with the raw amino-acid sequence, 203 residues long: MGGSLRVAVLGAPGVGKTAIIRQFLFGDYPERHRPTDGPRLYRPAVLLDGAVYDLSIRDGDVAGPGSSPGGPEEWPDAKDWSLQDTDAFVLVYDICSPDSFDYVKALRQRIAETRPAGAPEAPILVVGNKRDRQRLRFGPRRALAALVRRGWRCGYLECSAKYNWHVLRLFRELLRCALVRARPAHPALRLQGALHPARCSLM.

The interval 1–203 is small GTPase-like; it reads MGGSLRVAVL…ALHPARCSLM (203 aa). Residue 11–18 participates in GTP binding; sequence GAPGVGKT. Residues 33–42 carry the Effector region motif; the sequence is HRPTDGPRLY. GTP is bound by residues 59 to 62 and 129 to 132; these read DGDV and NKRD. C200 is subject to Cysteine methyl ester. C200 is lipidated: S-farnesyl cysteine. A propeptide spans 201–203 (removed in mature form); sequence SLM.

The protein belongs to the small GTPase superfamily. Ras family. Post-translationally, isoprenylation is essential for nucleolar localization, and the proliferation-inhibiting activity of RASL10A. In terms of tissue distribution, expression appears to be strictly limited to the central nervous system.

The protein resides in the cell membrane. The protein localises to the nucleus. Its subcellular location is the nucleolus. It carries out the reaction GTP + H2O = GDP + phosphate + H(+). In terms of biological role, potent inhibitor of cellular proliferation. The protein is Ras-like protein family member 10A (RASL10A) of Homo sapiens (Human).